Reading from the N-terminus, the 123-residue chain is Histone H2B.1/H2B.2 (123 aa).

Residues 1-30 form a disordered region; sequence MPPKVSGKAAKKAGKAQKNITKGDKKKNRK. O-linked (GlcNAc) serine glycosylation is present at Ser-110. A Glycyl lysine isopeptide (Lys-Gly) (interchain with G-Cter in ubiquitin) cross-link involves residue Lys-118.

Belongs to the histone H2B family. In terms of assembly, the nucleosome is a histone octamer containing two molecules each of H2A, H2B, H3 and H4 assembled in one H3-H4 heterotetramer and two H2A-H2B heterodimers. The octamer wraps approximately 147 bp of DNA. Post-translationally, monoubiquitination of Lys-118 gives a specific tag for epigenetic transcriptional activation and is also prerequisite for histone H3 'Lys-4' and 'Lys-79' methylation. In terms of processing, glcNAcylation at Ser-110 promotes monoubiquitination of Lys-118. It fluctuates in response to extracellular glucose, and associates with transcribed genes.

The protein localises to the nucleus. The protein resides in the chromosome. Its function is as follows. Core component of nucleosome. Nucleosomes wrap and compact DNA into chromatin, limiting DNA accessibility to the cellular machineries which require DNA as a template. Histones thereby play a central role in transcription regulation, DNA repair, DNA replication and chromosomal stability. DNA accessibility is regulated via a complex set of post-translational modifications of histones, also called histone code, and nucleosome remodeling. The chain is Histone H2B.1/H2B.2 from Tigriopus californicus (Marine copepod).